Here is a 338-residue protein sequence, read N- to C-terminus: Anthranilate phosphoribosyltransferase (338 aa).

Residues G82, 85-86, T90, 92-95, 110-118, and S122 contribute to the 5-phospho-alpha-D-ribose 1-diphosphate site; these read GD, NIST, and KHGNRAASS. G82 contributes to the anthranilate binding site. S94 is a binding site for Mg(2+). N113 provides a ligand contact to anthranilate. R168 lines the anthranilate pocket. Mg(2+) is bound by residues D226 and E227.

Belongs to the anthranilate phosphoribosyltransferase family. As to quaternary structure, homodimer. Mg(2+) serves as cofactor.

It catalyses the reaction N-(5-phospho-beta-D-ribosyl)anthranilate + diphosphate = 5-phospho-alpha-D-ribose 1-diphosphate + anthranilate. Its pathway is amino-acid biosynthesis; L-tryptophan biosynthesis; L-tryptophan from chorismate: step 2/5. Catalyzes the transfer of the phosphoribosyl group of 5-phosphorylribose-1-pyrophosphate (PRPP) to anthranilate to yield N-(5'-phosphoribosyl)-anthranilate (PRA). This is Anthranilate phosphoribosyltransferase from Deinococcus radiodurans (strain ATCC 13939 / DSM 20539 / JCM 16871 / CCUG 27074 / LMG 4051 / NBRC 15346 / NCIMB 9279 / VKM B-1422 / R1).